The primary structure comprises 350 residues: MGSSAGEIMGRLMKGEIEDEELKKLIRHQWDRRIEWGYKPTHEKQLAFNLDFIKGLKEMVMSGEIDTMNKETYELPTAFLEAVFGKTVKQSCCYFKDENSTIDEAEEAAHELYCERAQIKDGQTVLDIGCGQGGLVLYIAEKYKNCHVTGLTNSKAQANYIEQQAEKLELTNVDVIFADVTKFDTDKTYDRILVVETIEHMKNIQLFMKKLSTWMTEDSLLFVDHISHKTFNHNFEALDEDDWYSGFIFPKGCVTILSSSTLLYFQDDVSALDHWVVNGMHMARSVEAWRKKLDETIEAAREILEPGLGSKEAVNQVITHIRTFCIGGYEQFSYNNGEEWMITQILFKKK.

S91, G129, N153, Q157, D179, V180, and V195 together coordinate S-adenosyl-L-methionine. C325 is a catalytic residue.

Belongs to the CFA/CMAS family. As to quaternary structure, homodimer.

It is found in the cytoplasm. It carries out the reaction (S)-stylopine + S-adenosyl-L-methionine = (S)-cis-N-methylstylopine + S-adenosyl-L-homocysteine. The enzyme catalyses (S)-tetrahydropalmatine + S-adenosyl-L-methionine = (S)-cis-N-methyltetrahydropalmatine + S-adenosyl-L-homocysteine. The catalysed reaction is (S)-canadine + S-adenosyl-L-methionine = (S)-cis-N-methylcanadine + S-adenosyl-L-homocysteine. It catalyses the reaction (S)-scoulerine + S-adenosyl-L-methionine = (S)-cis-N-methylscoulerine + S-adenosyl-L-homocysteine. It participates in alkaloid biosynthesis. Functionally, N-methyltransferase with a broad substrate range, accepting protoberberine alkaloids (R,S)-stylopine, (R,S)-nandinine and (R,S)-tetrahydropalmatine, and to a lesser extent (R,S)-canadine, (R,S)-tetrahydrogroenlandicine (cheilanthifoline) and (S)-scoulerine. This Eschscholzia californica (California poppy) protein is (S)-tetrahydroprotoberberine N-methyltransferase.